Consider the following 692-residue polypeptide: Junctophilin-2 (692 aa).

Topologically, residues Met-1 to Thr-670 are cytoplasmic. MORN repeat units follow at residues Tyr-14–Gly-36, Tyr-38–Thr-59, Phe-60–Arg-79, Tyr-82–Ala-104, Tyr-106–Thr-128, and Tyr-129–Met-151. Phosphoserine is present on residues Ser-162 and Ser-165. 2 disordered regions span residues Ser-164–Pro-190 and Leu-246–Phe-273. MORN repeat units lie at residues Tyr-285–Arg-307 and Tyr-308–Arg-330. The Bipartite nuclear localization signal signature appears at Lys-345–Lys-359. The segment at Asn-439 to Glu-661 is disordered. A phosphoserine mark is found at Ser-440, Ser-442, and Ser-462. Basic and acidic residues predominate over residues Glu-457–Pro-471. Thr-470 is modified (phosphothreonine). Positions Glu-474–Pro-487 are enriched in pro residues. At Ser-479 the chain carries Phosphoserine. Residue Thr-483 is modified to Phosphothreonine. The Nuclear localization signal motif lies at Lys-488 to Pro-492. 2 positions are modified to phosphoserine: Ser-527 and Ser-533. A compositionally biased stretch (acidic residues) spans Pro-573–Pro-582. Phosphoserine is present on residues Ser-589, Ser-593, Ser-604, and Ser-609. Positions Ala-627–Gly-640 are enriched in basic and acidic residues. Residues Val-671–Leu-691 traverse the membrane as a helical; Anchor for type IV membrane protein segment.

This sequence belongs to the junctophilin family. Interacts with TRPC3. Interacts with BAG5 and HSPA8; the interaction with HSPA8 is increased in the presence of BAG5. Junctophilin-2 N-terminal fragment: Interacts with MEF2C. Proteolytically cleaved by calpain in response to cardiac stress. The major cleavage site takes place at the C-terminus and leads to the release of the Junctophilin-2 N-terminal fragment chain (JP2NT). In terms of processing, phosphorylation on Ser-165, probably by PKC, affects RYR1-mediated calcium ion release, interaction with TRPC3, and skeletal muscle myotubule development.

Its subcellular location is the cell membrane. It is found in the sarcoplasmic reticulum membrane. The protein localises to the endoplasmic reticulum membrane. It localises to the nucleus. Functionally, membrane-binding protein that provides a structural bridge between the plasma membrane and the sarcoplasmic reticulum and is required for normal excitation-contraction coupling in cardiomyocytes. Provides a structural foundation for functional cross-talk between the cell surface and intracellular Ca(2+) release channels by maintaining the 12-15 nm gap between the sarcolemma and the sarcoplasmic reticulum membranes in the cardiac dyads. Necessary for proper intracellular Ca(2+) signaling in cardiac myocytes via its involvement in ryanodine receptor-mediated calcium ion release. Contributes to the construction of skeletal muscle triad junctions. Transcription repressor required to safeguard against the deleterious effects of cardiac stress. Generated following cleavage of the Junctophilin-2 chain by calpain in response to cardiac stress in cardiomyocytes. Following cleavage and release from the membrane, translocates to the nucleus, binds DNA and represses expression of genes implicated in cell growth and differentiation, hypertrophy, inflammation and fibrosis. Modifies the transcription profile and thereby attenuates pathological remodeling in response to cardiac stress. Probably acts by competing with MEF2 transcription factors and TATA-binding proteins. The protein is Junctophilin-2 of Rattus norvegicus (Rat).